Here is a 519-residue protein sequence, read N- to C-terminus: Cell division cycle protein 20 homolog B (519 aa).

Polar residues predominate over residues 79–98; sequence QSQTRALSSDSFGEEQSTTY. The tract at residues 79–133 is disordered; that stretch reads QSQTRALSSDSFGEEQSTTYLPEASGSVLKTPPEKETLTLGSRKEQLKTPSKGIS. Positions 110-125 are enriched in basic and acidic residues; it reads PPEKETLTLGSRKEQL. 7 WD repeats span residues 229–266, 271–310, 311–341, 353–392, 399–441, 443–484, and 487–519; these read RNDY…GIEN, LTCN…RLRN, MLGH…YHHD, RHKQ…SAQG, TQST…SIQT, STNS…RSGG, and GHRG…WNCY.

This sequence belongs to the WD repeat CDC20/Fizzy family. As to expression, expressed in multiciliated cells (MCCs).

It localises to the cytoplasm. Protein regulator of centriole-deuterosome disengagement and subsequently participates in the ciliogenesis in multiciliated cells (MCCs). The polypeptide is Cell division cycle protein 20 homolog B (Homo sapiens (Human)).